The chain runs to 204 residues: Cytochrome P450 monooxygenase PC-23 (204 aa).

C138 is a heme binding site.

The protein belongs to the cytochrome P450 family. Heme is required as a cofactor.

The protein operates within secondary metabolite biosynthesis. Functionally, cytochrome P450 monooxygenase; part of the gene cluster that mediates the biosynthesis of the indole diterpenes penitrems. The geranylgeranyl diphosphate (GGPP) synthase penG catalyzes the first step in penitrem biosynthesis via conversion of farnesyl pyrophosphate and isopentyl pyrophosphate into geranylgeranyl pyrophosphate (GGPP). Condensation of indole-3-glycerol phosphate with GGPP by the prenyl transferase penC then forms 3-geranylgeranylindole (3-GGI). Epoxidation by the FAD-dependent monooxygenase penM leads to a epoxidized-GGI that is substrate of the terpene cyclase penB for cyclization to yield paspaline. Paspaline is subsequently converted to 13-desoxypaxilline by the cytochrome P450 monooxygenase penP, the latter being then converted to paxilline by the cytochrome P450 monooxygenase penQ. Paxilline is converted to beta-paxitriol via C-10 ketoreduction by the short-chain dehydrogenase PC-15 which can be monoprenylated at the C-20 by the indole diterpene prenyltransferase penD. A two-step elimination (acetylation and elimination) process performed by the O-acetyltransferase PC-16 and the P.simplicissimum ptmI-ortholog not yet identified in P.crustosum, leads to the production of the prenylated form of penijanthine. The FAD-linked oxidoreductase ptmO then converts the prenylated form of penijanthine into PC-M5 which is in turn transformed into PC-M4 by the aromatic dimethylallyltransferase PC-22. A series of oxidation steps involving 4 cytochrome P450 monooxygenases (PC-21, PC-05, PC-23, PC-20) and a FAD-dependent monooxygenase (PC-14) are required for the transformation of PC-M4 to penitrems A and E. Synthesis of these final products is proposed to proceed via penitrems D and C (PC-21, PC-05, PC-14) and penitrems B and F (PC-21, PC-05, PC-14, PC-23). This is Cytochrome P450 monooxygenase PC-23 from Penicillium crustosum (Blue mold fungus).